The sequence spans 337 residues: Trace amine-associated receptor 5 (337 aa).

Over 1–34 (MRAVFIQGAEEHPAAFCYQVNGSCPRTVHTLGIQ) the chain is Extracellular. Asparagine 21 is a glycosylation site (N-linked (GlcNAc...) asparagine). Disulfide bonds link cysteine 24–cysteine 188 and cysteine 99–cysteine 192. The chain crosses the membrane as a helical span at residues 35-55 (LVIYLACAAGMLIIVLGNVFV). At 56–70 (AFAVSYFKALHTPTN) the chain is on the cytoplasmic side. A helical membrane pass occupies residues 71-91 (FLLLSLALADMFLGLLVLPLS). At 92-109 (TIRSVESCWFFGDFLCRL) the chain is on the extracellular side. The chain crosses the membrane as a helical span at residues 110–130 (HTYLDTLFCLTSIFHLCFISI). Over 131 to 154 (DRHCAICDPLLYPSKFTVRVALRY) the chain is Cytoplasmic. Residues 155-175 (ILAGWGVPAAYTSLFLYTDVV) form a helical membrane-spanning segment. An extracellular Loop 2 (ECL2) region spans residues 176 to 189 (ETRLSQWLEEMPCV). Residues 176-204 (ETRLSQWLEEMPCVGSCQLLLNKFWGWLN) are Extracellular-facing. Residues 205–225 (FPLFFVPCLIMISLYVKIFVV) traverse the membrane as a helical segment. The Cytoplasmic portion of the chain corresponds to 226-253 (ATRQAQQITTLSKSLAGAAKHERKAAKT). Residues 254 to 274 (LGIAVGIYLLCWLPFTIDTMV) form a helical membrane-spanning segment. Residues 275–284 (DSLLHFITPP) lie on the Extracellular side of the membrane. A helical membrane pass occupies residues 285 to 307 (LVFDIFIWFAYFNSACNPIIYVF). Residues 308-337 (SYQWFRKALKLTLSQKVFSPQTRTVDLYQE) are Cytoplasmic-facing.

Belongs to the G-protein coupled receptor 1 family. In terms of tissue distribution, expressed almost exclusively in skeletal muscle and selected areas of the brain, such amygdala, hippocampus, caudate nucleus, thalamus and hypothalamus. Weak expression is also find in substantia nigra.

Its subcellular location is the cell membrane. In terms of biological role, olfactory receptor specific for trimethylamine, a trace amine. Also activated at lower level by dimethylethylamine. Trimethylamine is a bacterial metabolite found in some animal odors, and to humans it is a repulsive odor associated with bad breath and spoiled food. Trimethylamine-binding causes a conformation change that triggers signaling via G(s)-class of G alpha proteins (GNAL or GNAS). The sequence is that of Trace amine-associated receptor 5 from Homo sapiens (Human).